We begin with the raw amino-acid sequence, 304 residues long: 1D-myo-inositol 2-acetamido-2-deoxy-alpha-D-glucopyranoside deacetylase 2 (304 aa).

Zn(2+) is bound by residues histidine 17, aspartate 20, and histidine 152.

It belongs to the MshB deacetylase family. The cofactor is Zn(2+).

It catalyses the reaction 1D-myo-inositol 2-acetamido-2-deoxy-alpha-D-glucopyranoside + H2O = 1D-myo-inositol 2-amino-2-deoxy-alpha-D-glucopyranoside + acetate. In terms of biological role, catalyzes the deacetylation of 1D-myo-inositol 2-acetamido-2-deoxy-alpha-D-glucopyranoside (GlcNAc-Ins) in the mycothiol biosynthesis pathway. This chain is 1D-myo-inositol 2-acetamido-2-deoxy-alpha-D-glucopyranoside deacetylase 2, found in Catenulispora acidiphila (strain DSM 44928 / JCM 14897 / NBRC 102108 / NRRL B-24433 / ID139908).